The chain runs to 506 residues: Aldehyde dehydrogenase [NAD(P)+] 1 (506 aa).

Glu-268 functions as the Proton acceptor in the catalytic mechanism. The Nucleophile role is filled by Cys-302.

This sequence belongs to the aldehyde dehydrogenase family.

It is found in the cytoplasm. The enzyme catalyses an aldehyde + NAD(+) + H2O = a carboxylate + NADH + 2 H(+). It catalyses the reaction 3-aminopropanal + NAD(+) + H2O = beta-alanine + NADH + 2 H(+). Functionally, cytoplasmic aldehyde dehydrogenase involved in ethanol oxidation. Required for pantothenic acid production through the conversion of 3-aminopropanal to beta-alanine, an intermediate in pantothenic acid (vitamin B5) and coenzyme A (CoA) biosynthesis. This Saccharomyces cerevisiae (strain ATCC 204508 / S288c) (Baker's yeast) protein is Aldehyde dehydrogenase [NAD(P)+] 1 (ALD2).